A 102-amino-acid chain; its full sequence is Putative septation protein SpoVG (102 aa).

The disordered stretch occupies residues 83–102 (TDEVIPDKNATSDNEESDEA).

Belongs to the SpoVG family.

Could be involved in septation. The sequence is that of Putative septation protein SpoVG from Staphylococcus epidermidis (strain ATCC 35984 / DSM 28319 / BCRC 17069 / CCUG 31568 / BM 3577 / RP62A).